We begin with the raw amino-acid sequence, 163 residues long: Superoxide dismutase [Mn] (163 aa).

Positions 2, 50, 134, and 138 each coordinate Mn(2+).

The protein belongs to the iron/manganese superoxide dismutase family. It depends on Mn(2+) as a cofactor.

The catalysed reaction is 2 superoxide + 2 H(+) = H2O2 + O2. Its function is as follows. Destroys superoxide anion radicals which are normally produced within the cells and which are toxic to biological systems. In Mycobacterium scrofulaceum, this protein is Superoxide dismutase [Mn] (sodA).